The chain runs to 212 residues: Orotate phosphoribosyltransferase (212 aa).

A 5-phospho-alpha-D-ribose 1-diphosphate-binding site is contributed by Lys26. Residue 34–35 (FF) participates in orotate binding. Residues 72–73 (YK), Arg99, Lys100, Lys103, His105, and 124–132 (DDVITVGTA) each bind 5-phospho-alpha-D-ribose 1-diphosphate. The orotate site is built by Thr128 and Arg156.

The protein belongs to the purine/pyrimidine phosphoribosyltransferase family. PyrE subfamily. Homodimer. Mg(2+) is required as a cofactor.

It catalyses the reaction orotidine 5'-phosphate + diphosphate = orotate + 5-phospho-alpha-D-ribose 1-diphosphate. Its pathway is pyrimidine metabolism; UMP biosynthesis via de novo pathway; UMP from orotate: step 1/2. Functionally, catalyzes the transfer of a ribosyl phosphate group from 5-phosphoribose 1-diphosphate to orotate, leading to the formation of orotidine monophosphate (OMP). The sequence is that of Orotate phosphoribosyltransferase from Ruthia magnifica subsp. Calyptogena magnifica.